The following is a 201-amino-acid chain: Histidine biosynthesis bifunctional protein HisIE (201 aa).

Positions 1–114 (MLTAQQIEKL…FAPAQTEWGF (114 aa)) are phosphoribosyl-AMP cyclohydrolase. The tract at residues 115-201 (LYQLEKLLAS…SCVIRRLRER (87 aa)) is phosphoribosyl-ATP pyrophosphohydrolase.

In the N-terminal section; belongs to the PRA-CH family. It in the C-terminal section; belongs to the PRA-PH family.

It is found in the cytoplasm. It catalyses the reaction 1-(5-phospho-beta-D-ribosyl)-ATP + H2O = 1-(5-phospho-beta-D-ribosyl)-5'-AMP + diphosphate + H(+). The catalysed reaction is 1-(5-phospho-beta-D-ribosyl)-5'-AMP + H2O = 1-(5-phospho-beta-D-ribosyl)-5-[(5-phospho-beta-D-ribosylamino)methylideneamino]imidazole-4-carboxamide. The protein operates within amino-acid biosynthesis; L-histidine biosynthesis; L-histidine from 5-phospho-alpha-D-ribose 1-diphosphate: step 2/9. It participates in amino-acid biosynthesis; L-histidine biosynthesis; L-histidine from 5-phospho-alpha-D-ribose 1-diphosphate: step 3/9. This chain is Histidine biosynthesis bifunctional protein HisIE, found in Photorhabdus laumondii subsp. laumondii (strain DSM 15139 / CIP 105565 / TT01) (Photorhabdus luminescens subsp. laumondii).